The chain runs to 225 residues: UPF0758 protein XCV4028 (225 aa).

Residues 102 to 224 enclose the MPN domain; it reads ALSDPPSVGR…PVSFAERGWL (123 aa). Residues His-173, His-175, and Asp-186 each coordinate Zn(2+). The short motif at 173–186 is the JAMM motif element; that stretch reads HNHPSGNPEPSEAD.

Belongs to the UPF0758 family.

The polypeptide is UPF0758 protein XCV4028 (Xanthomonas euvesicatoria pv. vesicatoria (strain 85-10) (Xanthomonas campestris pv. vesicatoria)).